The following is an 809-amino-acid chain: Hydrazine synthase subunit alpha (809 aa).

The first 27 residues, methionine 1–alanine 27, serve as a signal peptide directing secretion. Cysteine 303 is a binding site for Zn(2+). Cysteine 583 and cysteine 586 together coordinate heme. Zn(2+) is bound at residue histidine 587. Residues tyrosine 591, cysteine 685, cysteine 688, histidine 689, and histidine 772 each coordinate heme. One can recognise a Cytochrome c domain in the interval lysine 633–alanine 792.

In terms of assembly, part of the hydrazine synthase complex that forms an elongated dimer of heterotrimers composed of one alpha, one beta and one gamma subunit. Heme c is required as a cofactor.

Its subcellular location is the anammoxosome. It carries out the reaction hydrazine + 3 Fe(III)-[cytochrome c] + H2O = nitric oxide + 3 Fe(II)-[cytochrome c] + NH4(+) + 2 H(+). Its pathway is nitrogen metabolism. Component of the hydrazine synthase complex that catalyzes the condensation of nitric oxide (NO) with ammonium to form hydrazine. The alpha subunit catalyzes the second half-reaction, i.e. the condensation of hydroxylamine formed in the active site of the gamma subunit with ammonia, yielding hydrazine. Is involved in anaerobic ammonium oxidation (anammox), a biological process in which nitrite is used as the electron acceptor in the conversion of ammonium to dinitrogen gas (N2) and water; this bacterial process has a major role in the Earth's nitrogen cycle and has been estimated to synthesize up to 50% of the dinitrogen gas emitted into our atmosphere from the oceans. The polypeptide is Hydrazine synthase subunit alpha (Kuenenia stuttgartiensis).